Here is a 102-residue protein sequence, read N- to C-terminus: Aspartyl/glutamyl-tRNA(Asn/Gln) amidotransferase subunit C (102 aa).

This sequence belongs to the GatC family. In terms of assembly, heterotrimer of A, B and C subunits.

The enzyme catalyses L-glutamyl-tRNA(Gln) + L-glutamine + ATP + H2O = L-glutaminyl-tRNA(Gln) + L-glutamate + ADP + phosphate + H(+). It catalyses the reaction L-aspartyl-tRNA(Asn) + L-glutamine + ATP + H2O = L-asparaginyl-tRNA(Asn) + L-glutamate + ADP + phosphate + 2 H(+). Allows the formation of correctly charged Asn-tRNA(Asn) or Gln-tRNA(Gln) through the transamidation of misacylated Asp-tRNA(Asn) or Glu-tRNA(Gln) in organisms which lack either or both of asparaginyl-tRNA or glutaminyl-tRNA synthetases. The reaction takes place in the presence of glutamine and ATP through an activated phospho-Asp-tRNA(Asn) or phospho-Glu-tRNA(Gln). In Leuconostoc citreum (strain KM20), this protein is Aspartyl/glutamyl-tRNA(Asn/Gln) amidotransferase subunit C.